The following is a 358-amino-acid chain: Chorismate synthase (358 aa).

R46 lines the NADP(+) pocket. FMN is bound by residues 123 to 125, 235 to 236, G275, 290 to 294, and R316; these read RSS, NA, and KPTPS.

It belongs to the chorismate synthase family. In terms of assembly, homotetramer. It depends on FMNH2 as a cofactor.

The enzyme catalyses 5-O-(1-carboxyvinyl)-3-phosphoshikimate = chorismate + phosphate. Its pathway is metabolic intermediate biosynthesis; chorismate biosynthesis; chorismate from D-erythrose 4-phosphate and phosphoenolpyruvate: step 7/7. Functionally, catalyzes the anti-1,4-elimination of the C-3 phosphate and the C-6 proR hydrogen from 5-enolpyruvylshikimate-3-phosphate (EPSP) to yield chorismate, which is the branch point compound that serves as the starting substrate for the three terminal pathways of aromatic amino acid biosynthesis. This reaction introduces a second double bond into the aromatic ring system. The chain is Chorismate synthase from Sulfurimonas denitrificans (strain ATCC 33889 / DSM 1251) (Thiomicrospira denitrificans (strain ATCC 33889 / DSM 1251)).